The chain runs to 930 residues: Serine/threonine-protein kinase PknD (930 aa).

Residues 4–291 (YDIIRMIGKG…ALKADIEQHL (288 aa)) form the Protein kinase domain. Residues 10 to 18 (IGKGGMGEV) and K33 contribute to the ATP site. Catalysis depends on D138, which acts as the Proton acceptor.

This sequence belongs to the protein kinase superfamily. Ser/Thr protein kinase family. In terms of processing, autophosphorylated on serine and threonine residues.

It carries out the reaction L-seryl-[protein] + ATP = O-phospho-L-seryl-[protein] + ADP + H(+). The catalysed reaction is L-threonyl-[protein] + ATP = O-phospho-L-threonyl-[protein] + ADP + H(+). Together with the serine/threonine kinase Pkn1, may play a role in the specific interactions with host proteins during intracellular growth. The polypeptide is Serine/threonine-protein kinase PknD (Chlamydia caviae (strain ATCC VR-813 / DSM 19441 / 03DC25 / GPIC) (Chlamydophila caviae)).